A 325-amino-acid polypeptide reads, in one-letter code: MNALTAVKANTDDLAQRHTGFTLAPSAQSPRLLALTFTADTTKQFLHQVAQWPVQALEYKSFLRFKIGKILDDLCGNQLQPLLIKTLLNRAQGALLISAEGIDDVAQAEEMVKLATAVAHLIGRSNYDAMSGQYYARFVVKNVDNSDSYLRQPHRVMELHNDGTYVEEVTDYVLMMKIDEQNMEGGNSLLLHLDDWEHLESFFTHPLARRVMRWAAPPSKNVSHDVWHPVFDVDQQGRPVMRYIDQFVQPKDFEEGVWLSELSDALETSQNILSVPVPVGKFLLINNLFWLHGRDRFTPHPDLRRELMRQRGYFAYAASHYQTHQ.

The Fe cation site is built by histidine 160, aspartate 162, and histidine 292.

This sequence belongs to the glutarate hydroxylase family. Homotetramer. It depends on Fe(2+) as a cofactor.

It catalyses the reaction glutarate + 2-oxoglutarate + O2 = (S)-2-hydroxyglutarate + succinate + CO2. It participates in amino-acid degradation. In terms of biological role, acts as an alpha-ketoglutarate-dependent dioxygenase catalyzing hydroxylation of glutarate (GA) to L-2-hydroxyglutarate (L2HG). Functions in a L-lysine degradation pathway that proceeds via cadaverine, glutarate and L-2-hydroxyglutarate. The polypeptide is Glutarate 2-hydroxylase (Salmonella typhimurium (strain SL1344)).